The sequence spans 127 residues: Glycine cleavage system H protein (127 aa).

Residues 24-105 enclose the Lipoyl-binding domain; sequence TLTIGITDLA…AYDAWLFKIK (82 aa). K65 carries the post-translational modification N6-lipoyllysine.

This sequence belongs to the GcvH family. The glycine cleavage system is composed of four proteins: P, T, L and H. (R)-lipoate serves as cofactor.

The glycine cleavage system catalyzes the degradation of glycine. The H protein shuttles the methylamine group of glycine from the P protein to the T protein. The chain is Glycine cleavage system H protein from Ralstonia nicotianae (strain ATCC BAA-1114 / GMI1000) (Ralstonia solanacearum).